Consider the following 807-residue polypeptide: Glycerol-3-phosphate acyltransferase (807 aa).

The HXXXXD motif motif lies at 308–313; that stretch reads CHRSHM.

The protein belongs to the GPAT/DAPAT family.

It localises to the cell inner membrane. It catalyses the reaction sn-glycerol 3-phosphate + an acyl-CoA = a 1-acyl-sn-glycero-3-phosphate + CoA. The protein operates within phospholipid metabolism; CDP-diacylglycerol biosynthesis; CDP-diacylglycerol from sn-glycerol 3-phosphate: step 1/3. The protein is Glycerol-3-phosphate acyltransferase of Shewanella baltica (strain OS223).